The following is a 244-amino-acid chain: MKLTKTSRPTTPQPGLISTWLLRPLLLLLAIALLYQSWFLLHIIYWRTYHPTTSAFMQDRLETMHRQNPAAKLQHRWVDYEQISNHLKRAVIATEDARFMQHQGFDYKAIEVAWKKNLKQRKLAAGGSTISQQLAKNLFLSSEKTVWRKLQETLITLILEEFLSKRRILEIYLNVIEWGEGVFGIEAAARHYFGIPASSLAPEQSAWLASIISNPRFYDTHRQSPRLLKKARIILSRLPTAKIP.

A helical transmembrane segment spans residues 25 to 45 (LLLLLAIALLYQSWFLLHIIY).

The protein belongs to the glycosyltransferase 51 family.

The protein resides in the cell inner membrane. The catalysed reaction is [GlcNAc-(1-&gt;4)-Mur2Ac(oyl-L-Ala-gamma-D-Glu-L-Lys-D-Ala-D-Ala)](n)-di-trans,octa-cis-undecaprenyl diphosphate + beta-D-GlcNAc-(1-&gt;4)-Mur2Ac(oyl-L-Ala-gamma-D-Glu-L-Lys-D-Ala-D-Ala)-di-trans,octa-cis-undecaprenyl diphosphate = [GlcNAc-(1-&gt;4)-Mur2Ac(oyl-L-Ala-gamma-D-Glu-L-Lys-D-Ala-D-Ala)](n+1)-di-trans,octa-cis-undecaprenyl diphosphate + di-trans,octa-cis-undecaprenyl diphosphate + H(+). The protein operates within cell wall biogenesis; peptidoglycan biosynthesis. Peptidoglycan polymerase that catalyzes glycan chain elongation from lipid-linked precursors. The polypeptide is Biosynthetic peptidoglycan transglycosylase (Nitrosomonas eutropha (strain DSM 101675 / C91 / Nm57)).